The sequence spans 100 residues: Large ribosomal subunit protein uL23 (100 aa).

This sequence belongs to the universal ribosomal protein uL23 family. As to quaternary structure, part of the 50S ribosomal subunit. Contacts protein L29, and trigger factor when it is bound to the ribosome.

Functionally, one of the early assembly proteins it binds 23S rRNA. One of the proteins that surrounds the polypeptide exit tunnel on the outside of the ribosome. Forms the main docking site for trigger factor binding to the ribosome. In Synechococcus sp. (strain CC9605), this protein is Large ribosomal subunit protein uL23.